Here is a 608-residue protein sequence, read N- to C-terminus: ABC transporter ATP-binding protein RamB (608 aa).

A run of 5 helical transmembrane segments spans residues 25–45, 66–86, 141–161, 166–186, and 253–273; these read GVLV…FLVG, LWLG…RGVF, GLVL…LGLL, ALLV…LVTL, and AALG…VEWL. The ABC transmembrane type-1 domain maps to 30 to 296; it reads LALWSLAESG…FTYLVQSLLP (267 aa). Positions 321–362 are disordered; sequence GPEPEPEPEPEPEPEPELGSGLEPEPEPASEPESGPSTASAS. A compositionally biased stretch (acidic residues) spans 324 to 336; that stretch reads PEPEPEPEPEPEP. Over residues 351 to 362 the composition is skewed to low complexity; sequence EPESGPSTASAS. The ABC transporter domain occupies 376–605; it reads VELRSVTLSY…SPLYRDLTGH (230 aa). 410 to 417 lines the ATP pocket; that stretch reads GPSGIGKS.

The protein belongs to the ABC transporter superfamily.

The protein localises to the cell membrane. Its function is as follows. Probably involved in exporting SapB from the cell. Expression of the ram locus (ramA, ramB and ramR) induces rapid aerial mycelium formation in S.lividans. The sequence is that of ABC transporter ATP-binding protein RamB from Streptomyces coelicolor (strain ATCC BAA-471 / A3(2) / M145).